Consider the following 983-residue polypeptide: Receptor-type tyrosine-protein phosphatase-like N (983 aa).

The signal sequence occupies residues 1–40 (MRRPRRPGGPAGCGGSEGSGGLRLLVCLLLLSGRPGGCSA). The tract at residues 41 to 137 (ISAHGCLFDR…HPRDRSGSVP (97 aa)) is RESP18 homology domain. The Lumenal segment spans residues 41-579 (ISAHGCLFDR…RQAHGISPMR (539 aa)). Cys59 and Cys68 are joined by a disulfide. Basic and acidic residues predominate over residues 118–133 (RIPRLRPPEPHPRDRS). 3 disordered regions span residues 118–179 (RIPR…SPLS), 293–330 (RARA…SPPQ), and 399–420 (GDTA…ASST). Positions 148 to 158 (SQGNPTGSSPA) are enriched in polar residues. Over residues 307–326 (RAEDSSEGHEEEVLGGHGEK) the composition is skewed to basic and acidic residues. Phosphoserine occurs at positions 311 and 312. The tract at residues 453–579 (SPLGQSQPTV…RQAHGISPMR (127 aa)) is sufficient for dimerization of proICA512. Asn510 and Asn528 each carry an N-linked (GlcNAc...) asparagine glycan. Residues 580–604 (SLLLTLVALAGVAGLLVALAVALCM) form a helical membrane-spanning segment. Positions 605–736 (RHHSKQRDKE…PNTCATAQGE (132 aa)) are sufficient for dimerization of proICA512. The Cytoplasmic portion of the chain corresponds to 605 to 983 (RHHSKQRDKE…VNAILKALPQ (379 aa)). A disordered region spans residues 648-684 (RAEGQPEPSRVSSVSSQFSDAAQASPSSHSSTPSWCE). Over residues 652–681 (QPEPSRVSSVSSQFSDAAQASPSSHSSTPS) the composition is skewed to low complexity. Residues 713–973 (LAKEWQALCA…EFALTAVAEE (261 aa)) form the Tyrosine-protein phosphatase domain. Residue Lys758 forms a Glycyl lysine isopeptide (Lys-Gly) (interchain with G-Cter in SUMO) linkage.

It belongs to the protein-tyrosine phosphatase family. Receptor class 8 subfamily. In terms of assembly, homodimer; shown for the unprocessed protein (proICA512) in the endoplasmic reticulum and resolved during protein maturation as ICA512-TMF seems to be predominantly monomeric in secretory granules; however, ICA512-CCF interacts with ICA512-TMF disrupting the ICA512-TMF:SNTB2 complex. The isolated lumenal RESP18 homology domain has been shown to form disulfide-linked homooligomers. Interacts (via cytoplasmic domain) with phosphorylated SNTB2; this protects PTPRN against cleavage by CAPN1 to produce ICA512-CCF. Dephosphorylation of SNTB2 upon insulin stimulation disrupts the interaction and results in PTPRN cleavage. Interacts with SNX19. ICA512-CCF interacts with PIAS4; in the nucleus. Interacts with STAT5B (phosphorylated); down-regulated by ICA512-CCF sumoylation; ICA512-CCF prevents STAT5B dephosphorylation; ICA512-CCF mediates interaction of STAT5B with PIAS4. Interacts (via RESP18 homology domain) with insulin and proinsulin. Interacts with PTPRN2, PTPRA and PTPRE. In terms of processing, subject to proteolytic cleavage at multiple sites. Subject to cleavage on a pair of basic residues. Following exocytosis of secretory granules in pancreatic beta-cells ICA512-TMF located in the plasma-membrane is cleaved by mu-type calpain CPN1 to yield ICA512-CCF. Post-translationally, N-glycosylated. O-glycosylated. In terms of processing, sumoylated at two sites including Lys-758. Sumoylation decreases interaction with STAT5. Detected in pancreas islets. Detected in pancreas alpha, beta and delta cells, and in chromaffin cells in the adrenal medulla. Detected in amygdala, hypothalamus, autonomous nerve fibers and ganglia, especially at synaptic contacts. Detected in pituitary (at protein level). Detected in brain, specifically in cerebral cortex, diencephalon and brain stem.

It is found in the membrane. The protein localises to the cytoplasmic vesicle. The protein resides in the secretory vesicle membrane. Its subcellular location is the perikaryon. It localises to the cell projection. It is found in the axon. The protein localises to the synapse. The protein resides in the cell membrane. Its subcellular location is the endosome. It localises to the nucleus. Its function is as follows. Plays a role in vesicle-mediated secretory processes. Required for normal accumulation of secretory vesicles in hippocampus, pituitary and pancreatic islets. Required for the accumulation of normal levels of insulin-containing vesicles and preventing their degradation. Plays a role in insulin secretion in response to glucose stimuli. Required for normal accumulation of the neurotransmitters norepinephrine, dopamine and serotonin in the brain. In females, but not in males, required for normal accumulation and secretion of pituitary hormones, such as luteinizing hormone (LH) and follicle-stimulating hormone (FSH). Required to maintain normal levels of renin expression and renin release. Seems to lack intrinsic enzyme activity. Functionally, ICA512-TMF regulates dynamics and exocytosis of insulin secretory granules (SGs); binding of ICA512-TMF to SNTB2/beta-2-syntrophin is proposed to restrain SGs mobility and exocytosis by tethering them to the actin cytoskeleton depending on UTRN; the function is inhibited by cytoplasmic ICA512-CFF dimerizing with ICA512-TMF and displacing SNTB2. ICA512-CCF translocated to the nucleus promotes expression of insulin and other granule-related genes; the function implicates binding to and regulating activity of STAT5B probably by preventing its dephosphorylation and potentially by inducing its sumoylation by recruiting PIAS4. Enhances pancreatic beta-cell proliferation by converging with signaling by STAT5B and STAT3. ICA512-CCF located in the cytoplasm regulates dynamics and exocytosis of insulin secretory granules (SGs) by dimerizing with ICA512-TMF and displacing SNTB2 thus enhancing SGs mobility and exocytosis. This Rattus norvegicus (Rat) protein is Receptor-type tyrosine-protein phosphatase-like N (Ptprn).